Reading from the N-terminus, the 864-residue chain is Leucine--tRNA ligase (864 aa).

Residues Pro-47–His-57 carry the 'HIGH' region motif. Positions Ser-298–Thr-317 are disordered. Residues Glu-299 to Lys-309 are compositionally biased toward basic and acidic residues. The 'KMSKS' region motif lies at Lys-622–Ser-626. Lys-625 is an ATP binding site.

Belongs to the class-I aminoacyl-tRNA synthetase family.

Its subcellular location is the cytoplasm. The enzyme catalyses tRNA(Leu) + L-leucine + ATP = L-leucyl-tRNA(Leu) + AMP + diphosphate. In Synechococcus sp. (strain RCC307), this protein is Leucine--tRNA ligase.